Here is a 359-residue protein sequence, read N- to C-terminus: Protein FLX-like 2 (359 aa).

The span at 1-16 (MESKGRIHPSHHHMRR) shows a compositional bias: basic residues. The segment at 1–27 (MESKGRIHPSHHHMRRPLPGPGGCIAH) is disordered. Residues 83–236 (HGSLRQELAA…EKLQAQLMNN (154 aa)) adopt a coiled-coil conformation. Positions 303-359 (TQPGYFPQRPGYNFPRGPPGSYDPTTRLPTGPYGAPFPPGPSNNTPYAGTHGNPSRR) are disordered.

It belongs to the FLX family. As to quaternary structure, interacts with FRI.

Its function is as follows. Has no transcriptional activation activity. The protein is Protein FLX-like 2 (FLXL2) of Arabidopsis thaliana (Mouse-ear cress).